The following is a 106-amino-acid chain: Phosphoribosyl-ATP pyrophosphatase (106 aa).

Belongs to the PRA-PH family.

The protein localises to the cytoplasm. The catalysed reaction is 1-(5-phospho-beta-D-ribosyl)-ATP + H2O = 1-(5-phospho-beta-D-ribosyl)-5'-AMP + diphosphate + H(+). It participates in amino-acid biosynthesis; L-histidine biosynthesis; L-histidine from 5-phospho-alpha-D-ribose 1-diphosphate: step 2/9. In Methylobacillus flagellatus (strain ATCC 51484 / DSM 6875 / VKM B-1610 / KT), this protein is Phosphoribosyl-ATP pyrophosphatase.